A 408-amino-acid polypeptide reads, in one-letter code: Peptidase T (408 aa).

His-78 lines the Zn(2+) pocket. Residue Asp-80 is part of the active site. Asp-140 is a Zn(2+) binding site. The active-site Proton acceptor is the Glu-173. The Zn(2+) site is built by Glu-174, Asp-196, and His-379.

The protein belongs to the peptidase M20B family. Zn(2+) is required as a cofactor.

Its subcellular location is the cytoplasm. The catalysed reaction is Release of the N-terminal residue from a tripeptide.. Functionally, cleaves the N-terminal amino acid of tripeptides. This Shigella flexneri serotype 5b (strain 8401) protein is Peptidase T.